The following is a 299-amino-acid chain: Probable lipid kinase YegS (299 aa).

The DAGKc domain occupies 2–133 (ANFPASLLIL…IDMAMVNDKT (132 aa)). Residues T40, 66–72 (GDGTINE), and T95 contribute to the ATP site. Residues L215, D218, and L220 each coordinate Mg(2+). Residue E271 is the Proton acceptor of the active site.

This sequence belongs to the diacylglycerol/lipid kinase family. YegS lipid kinase subfamily. Requires Mg(2+) as cofactor. The cofactor is Ca(2+).

The protein localises to the cytoplasm. Functionally, probably phosphorylates lipids; the in vivo substrate is unknown. The chain is Probable lipid kinase YegS from Salmonella choleraesuis (strain SC-B67).